Reading from the N-terminus, the 1755-residue chain is Transposon Ty1-MR1 Gag-Pol polyprotein (1755 aa).

Composition is skewed to polar residues over residues 1-31 (MESQQLSQHSPISHGSACASVTSKEVQTTQD), 46-60 (VSTQANSQQPTTPLS), and 137-168 (VGTHLNTPSPESGNSFPDSSSAKSNMTSTNQH). Disordered regions lie at residues 1–88 (MESQ…YPQQ), 137–174 (VGTHLNTPSPESGNSFPDSSSAKSNMTSTNQHVRPPPI), and 350–420 (QQES…IRGS). The interval 299–401 (NNGIPINNKV…NSQSRTARAH (103 aa)) is RNA-binding. Positions 363 to 372 (SPSDEKKDSR) are enriched in basic and acidic residues. Residues 373-411 (TYTNTTKPKSITRNSQKPNNSQSRTARAHNVSTFNNSPG) show a composition bias toward polar residues. The active-site For protease activity; shared with dimeric partner is the aspartate 461. The segment at 583–640 (NVHTSESTRKYPYPFIHRMLAHANAQTIRYSLKNNTITYFNESDVDWSSAIDYQCPDC) is integrase-type zinc finger-like. The region spanning 660-835 (NSYEPFQYLH…AGLDISTLLP (176 aa)) is the Integrase catalytic domain. Mg(2+) is bound by residues aspartate 671 and aspartate 736. Residues 958–1172 (AVSPTDSTPP…LGGIGDSNAY (215 aa)) are disordered. Residues 960–969 (SPTDSTPPST) are compositionally biased toward low complexity. Residues 1005–1015 (STPQISDIEST) show a composition bias toward polar residues. A compositionally biased stretch (basic and acidic residues) spans 1038–1053 (ESSHASKSKDFRHSDS). 2 stretches are compositionally biased toward polar residues: residues 1054-1082 (YSDNETNHTNVPISSTGGTNNKTVPQTSE) and 1095-1106 (SIDTSSSESNSL). The Bipartite nuclear localization signal signature appears at 1178 to 1212 (KKRSLEDNETEIKVSRDTWNTKNMRSLEPPRSKKR). Positions 1338–1476 (NNYYITQLDI…DILGLEIKYQ (139 aa)) constitute a Reverse transcriptase Ty1/copia-type domain. Mg(2+) is bound by residues aspartate 1346, aspartate 1427, aspartate 1428, aspartate 1610, glutamate 1652, and aspartate 1685. The 143-residue stretch at 1610 to 1752 (DASYGNQPYY…IKTFKLLTNK (143 aa)) folds into the RNase H Ty1/copia-type domain.

The capsid protein forms a homotrimer, from which the VLPs are assembled. The protease is a homodimer, whose active site consists of two apposed aspartic acid residues. In terms of processing, initially, virus-like particles (VLPs) are composed of the structural unprocessed proteins Gag and Gag-Pol, and also contain the host initiator methionine tRNA (tRNA(i)-Met) which serves as a primer for minus-strand DNA synthesis, and a dimer of genomic Ty RNA. Processing of the polyproteins occurs within the particle and proceeds by an ordered pathway, called maturation. First, the protease (PR) is released by autocatalytic cleavage of the Gag-Pol polyprotein yielding capsid protein p45 and a Pol-p154 precursor protein. This cleavage is a prerequisite for subsequent processing of Pol-p154 at the remaining sites to release the mature structural and catalytic proteins. Maturation takes place prior to the RT reaction and is required to produce transposition-competent VLPs.

The protein resides in the cytoplasm. It is found in the nucleus. It carries out the reaction DNA(n) + a 2'-deoxyribonucleoside 5'-triphosphate = DNA(n+1) + diphosphate. The enzyme catalyses Endonucleolytic cleavage to 5'-phosphomonoester.. Capsid protein (CA) is the structural component of the virus-like particle (VLP), forming the shell that encapsulates the retrotransposons dimeric RNA genome. The particles are assembled from trimer-clustered units and there are holes in the capsid shells that allow for the diffusion of macromolecules. CA also has nucleocapsid-like chaperone activity, promoting primer tRNA(i)-Met annealing to the multipartite primer-binding site (PBS), dimerization of Ty1 RNA and initiation of reverse transcription. Its function is as follows. The aspartyl protease (PR) mediates the proteolytic cleavages of the Gag and Gag-Pol polyproteins after assembly of the VLP. Functionally, reverse transcriptase/ribonuclease H (RT) is a multifunctional enzyme that catalyzes the conversion of the retro-elements RNA genome into dsDNA within the VLP. The enzyme displays a DNA polymerase activity that can copy either DNA or RNA templates, and a ribonuclease H (RNase H) activity that cleaves the RNA strand of RNA-DNA heteroduplexes during plus-strand synthesis and hydrolyzes RNA primers. The conversion leads to a linear dsDNA copy of the retrotransposon that includes long terminal repeats (LTRs) at both ends. In terms of biological role, integrase (IN) targets the VLP to the nucleus, where a subparticle preintegration complex (PIC) containing at least integrase and the newly synthesized dsDNA copy of the retrotransposon must transit the nuclear membrane. Once in the nucleus, integrase performs the integration of the dsDNA into the host genome. The polypeptide is Transposon Ty1-MR1 Gag-Pol polyprotein (TY1B-MR1) (Saccharomyces cerevisiae (strain ATCC 204508 / S288c) (Baker's yeast)).